The sequence spans 446 residues: UDP-N-acetylmuramoylalanine--D-glutamate ligase (446 aa).

112-118 is a binding site for ATP; it reads GTNGKST.

The protein belongs to the MurCDEF family.

Its subcellular location is the cytoplasm. It catalyses the reaction UDP-N-acetyl-alpha-D-muramoyl-L-alanine + D-glutamate + ATP = UDP-N-acetyl-alpha-D-muramoyl-L-alanyl-D-glutamate + ADP + phosphate + H(+). It functions in the pathway cell wall biogenesis; peptidoglycan biosynthesis. Functionally, cell wall formation. Catalyzes the addition of glutamate to the nucleotide precursor UDP-N-acetylmuramoyl-L-alanine (UMA). The polypeptide is UDP-N-acetylmuramoylalanine--D-glutamate ligase (Baumannia cicadellinicola subsp. Homalodisca coagulata).